The sequence spans 317 residues: MEHHHQHHRHHQRDDGEDDRQSFGVPPPHVDAPPQPHGLYQSQPHFDPYAPTPQAPAPYRSETQFEPHAPPPYRSEPYFETPAPPPSFGHVSHVGHQSPNESYPPEHHRYGGYQQPSNSLLESHGDHSGVTHVAHHSSNQPQSSSGVYHKPDENRLPDNLAGLAGRATVKVYSKAEPNYNLTIRDGKVILAPADPSDEAQHWYKDEKYSTKVKDADGHPCFALVNKATGEAMKHSVGATHPVHLIRYVPDKLDESVLWTESKDFGDGYRTIRMVNNTRLNVDAYHGDSKSGGVRDGTTIVLWDWNKGDNQLWKIFPF.

A compositionally biased stretch (basic residues) spans 1 to 11; sequence MEHHHQHHRHH. The tract at residues 1–157 is disordered; it reads MEHHHQHHRH…YHKPDENRLP (157 aa). Residues 25–36 are compositionally biased toward pro residues; the sequence is VPPPHVDAPPQP. Positions 136-146 are enriched in polar residues; sequence HSSNQPQSSSG. One can recognise a Ricin B-type lectin domain in the interval 168 to 315; the sequence is TVKVYSKAEP…KGDNQLWKIF (148 aa).

Interacts (via N-terminus) with ATS3A and ATS3B. Expressed in roots, rosette leaves, stems, cauline leaves and flowers.

Its subcellular location is the nucleus. The protein localises to the cytoplasm. Lectin which binds carbohydrates in vitro. Interacts through its lectin domain with glycan structures containing one or more Lewis X, Lewis Y or lactosamine motifs. May play a role in abiotic stress responses. May play a role in abscisic acid-induced stomatal closure. May play a role in disease resistance against Pseudomonas syringae through its involvement in stomatal movement. This Arabidopsis thaliana (Mouse-ear cress) protein is Ricin B-like lectin EULS3.